A 471-amino-acid chain; its full sequence is Serine/threonine-protein kinase AtPK2/AtPK19 (471 aa).

The tract at residues 1 to 21 is disordered; the sequence is MVSSQCSVANKNQTGKPFQKH. Positions 140–395 constitute a Protein kinase domain; that stretch reads FEVLKVVGQG…AEEIKKHKWF (256 aa). ATP is bound by residues 146-154 and K169; that span reads VGQGAFGKV. The Proton acceptor role is filled by D263. The segment at 281–307 is activation loop; the sequence is DFGLAKEFEENTRSNSMCGTTEYMAPE. S296 is subject to Phosphoserine; by PDPK1. Residues 396–466 enclose the AGC-kinase C-terminal domain; that stretch reads KAINWKKLEA…VRPPHSFLHR (71 aa). T455 is subject to Phosphothreonine; by TOR.

Belongs to the protein kinase superfamily. AGC Ser/Thr protein kinase family. S6 kinase subfamily. As to quaternary structure, interacts with TAP46. Binds to MRF1. Undergoes serine-specific autophosphorylation. Phosphorylated at Thr-455 by TOR.

The catalysed reaction is L-seryl-[protein] + ATP = O-phospho-L-seryl-[protein] + ADP + H(+). The enzyme catalyses L-threonyl-[protein] + ATP = O-phospho-L-threonyl-[protein] + ADP + H(+). Activated by PDK1. Functionally, downstream effector of TOR signaling pathway. May be involved in adaptation of plant to cold or high-salt conditions. Mediates the phosphorylation of MRFs (e.g. MRF1). This Arabidopsis thaliana (Mouse-ear cress) protein is Serine/threonine-protein kinase AtPK2/AtPK19 (ATPK2).